Consider the following 104-residue polypeptide: uncharacterized protein (104 aa).

This is an uncharacterized protein from Orgyia pseudotsugata (Douglas-fir tussock moth).